The following is a 319-amino-acid chain: Cytochrome c biogenesis protein CcsA (319 aa).

The next 7 membrane-spanning stretches (helical) occupy residues 9-29 (ILTH…LITL), 44-64 (GVIG…AYSG), 71-91 (LYES…FPYF), 143-163 (MVLG…LLVI), 225-245 (IISL…VWAN), 259-273 (TWAF…IYLH), and 286-306 (AIVA…VNLL).

Belongs to the CcmF/CycK/Ccl1/NrfE/CcsA family. As to quaternary structure, may interact with Ccs1.

Its subcellular location is the plastid. The protein localises to the chloroplast thylakoid membrane. In terms of biological role, required during biogenesis of c-type cytochromes (cytochrome c6 and cytochrome f) at the step of heme attachment. In Oenothera biennis (German evening primrose), this protein is Cytochrome c biogenesis protein CcsA.